The sequence spans 373 residues: Cell surface Cu-only superoxide dismutase ARB_03674 (373 aa).

An N-terminal signal peptide occupies residues 1–55 (MIWKQPPRRMGEMGGSLSRRFGNAAASWAVWRVSRSCFSLLFFFYFFLFFSSSSL). Asn-75 and Asn-141 each carry an N-linked (GlcNAc...) asparagine glycan. The Cu cation site is built by His-194, His-196, and His-212. The cysteines at positions 206 and 289 are disulfide-linked. Asn-254 and Asn-274 each carry an N-linked (GlcNAc...) asparagine glycan. Residue His-280 coordinates Cu cation. 2 N-linked (GlcNAc...) asparagine glycosylation sites follow: Asn-283 and Asn-291. Residues 329–348 (GHAPTISATYTPTPTPSPPA) are disordered. A compositionally biased stretch (low complexity) spans 331 to 340 (APTISATYTP). The GPI-anchor amidated glycine moiety is linked to residue Gly-352. The propeptide at 353–373 (AGRLVGFSLGAIMAALVPLAL) is removed in mature form.

This sequence belongs to the Cu-Zn superoxide dismutase family. In terms of assembly, monomer. Cu cation is required as a cofactor. In terms of processing, the GPI-anchor is attached to the protein in the endoplasmic reticulum and serves to target the protein to the cell surface. There, the glucosamine-inositol phospholipid moiety is cleaved off and the GPI-modified mannoprotein is covalently attached via its lipidless GPI glycan remnant to the 1,6-beta-glucan of the outer cell wall layer.

Its subcellular location is the secreted. It localises to the cell wall. It is found in the cell membrane. It carries out the reaction 2 superoxide + 2 H(+) = H2O2 + O2. Its function is as follows. Superoxide dismutases serve to convert damaging superoxide radicals, a key form of ROS, to less damaging hydrogen peroxide that can be converted into water by catalase action. Degrades host-derived reactive oxygen species to escape innate immune surveillance. Involved in the occurrence of miconazole-tolerant persisters in biofilms. Persisters are cells that survive high doses of an antimicrobial agent. The unusual attributes of SOD5-like fungal proteins, including the absence of zinc and an open active site that readily captures extracellular copper, make these SODs well suited to meet challenges in zinc and copper availability at the host-pathogen interface. This chain is Cell surface Cu-only superoxide dismutase ARB_03674, found in Arthroderma benhamiae (strain ATCC MYA-4681 / CBS 112371) (Trichophyton mentagrophytes).